Reading from the N-terminus, the 134-residue chain is ATP synthase epsilon chain (134 aa).

Belongs to the ATPase epsilon chain family. In terms of assembly, F-type ATPases have 2 components, CF(1) - the catalytic core - and CF(0) - the membrane proton channel. CF(1) has five subunits: alpha(3), beta(3), gamma(1), delta(1), epsilon(1). CF(0) has three main subunits: a, b and c.

Its subcellular location is the cell inner membrane. Produces ATP from ADP in the presence of a proton gradient across the membrane. The protein is ATP synthase epsilon chain of Solibacter usitatus (strain Ellin6076).